The primary structure comprises 436 residues: Trigger factor (436 aa).

The PPIase FKBP-type domain occupies 161–246; sequence GDQVIVDFDG…VREVKEPTLP (86 aa).

This sequence belongs to the FKBP-type PPIase family. Tig subfamily.

It is found in the cytoplasm. The enzyme catalyses [protein]-peptidylproline (omega=180) = [protein]-peptidylproline (omega=0). In terms of biological role, involved in protein export. Acts as a chaperone by maintaining the newly synthesized protein in an open conformation. Functions as a peptidyl-prolyl cis-trans isomerase. This Thioalkalivibrio sulfidiphilus (strain HL-EbGR7) protein is Trigger factor.